Consider the following 462-residue polypeptide: Gamma-aminobutyric acid receptor subunit alpha-5 (462 aa).

The first 31 residues, 1 to 31 (MDNGMFSGFIMIKNLLLFCISMNLSSHFGFS), serve as a signal peptide directing secretion. The Extracellular portion of the chain corresponds to 32 to 260 (QMPTSSVKDE…FHLKRKIGYF (229 aa)). An N-linked (GlcNAc...) asparagine glycan is attached at asparagine 45. Arginine 101 contributes to the 4-aminobutanoate binding site. Asparagine 145 is a glycosylation site (N-linked (GlcNAc...) asparagine). Threonine 164 lines the 4-aminobutanoate pocket. Residues cysteine 173 and cysteine 187 are joined by a disulfide bond. 2 N-linked (GlcNAc...) asparagine glycosylation sites follow: asparagine 207 and asparagine 236. The chain crosses the membrane as a helical span at residues 261 to 281 (VIQTYLPCIMTVILSQVSFWL). Residues 282–286 (NRESV) are Cytoplasmic-facing. A helical membrane pass occupies residues 287–308 (PARTVFGVTTVLTMTTLSISAR). Residues 309–318 (NSLPKVAYAT) are Extracellular-facing. A helical transmembrane segment spans residues 319–340 (AMDWFIAVCYAFVFSALIEFAT). Residues 341–427 (VNYFTKRGWA…TYNSISKIDK (87 aa)) are Cytoplasmic-facing. Lysine 355 is covalently cross-linked (Glycyl lysine isopeptide (Lys-Gly) (interchain with G-Cter in ubiquitin)). A disordered region spans residues 377–412 (FTTGKMSHPPNIPKEQTPAGTSNTTSVSVKPSEEKT). The chain crosses the membrane as a helical span at residues 428-448 (MSRIVFPVLFGTFNLVYWATY). Residues 449–462 (LNREPVIKGAASPK) lie on the Extracellular side of the membrane.

This sequence belongs to the ligand-gated ion channel (TC 1.A.9) family. Gamma-aminobutyric acid receptor (TC 1.A.9.5) subfamily. GABRA5 sub-subfamily. In terms of assembly, heteropentamer, formed by a combination of alpha (GABRA1-6), beta (GABRB1-3), gamma (GABRG1-3), delta (GABRD), epsilon (GABRE), rho (GABRR1-3), pi (GABRP) and theta (GABRQ) chains, each subunit exhibiting distinct physiological and pharmacological properties.

It is found in the postsynaptic cell membrane. It localises to the cell membrane. The catalysed reaction is chloride(in) = chloride(out). Its function is as follows. Alpha subunit of the heteropentameric ligand-gated chloride channel gated by gamma-aminobutyric acid (GABA), a major inhibitory neurotransmitter in the brain. GABA-gated chloride channels, also named GABA(A) receptors (GABAAR), consist of five subunits arranged around a central pore and contain GABA active binding site(s) located at the alpha and beta subunit interface(s). When activated by GABA, GABAARs selectively allow the flow of chloride anions across the cell membrane down their electrochemical gradient. GABAARs containing alpha-5/GABRA5 subunits are mainly extrasynaptic and contribute to the tonic GABAergic inhibition in the hippocampus. Extrasynaptic alpha-5-containing GABAARs in CA1 pyramidal neurons play a role in learning and memory processes. The sequence is that of Gamma-aminobutyric acid receptor subunit alpha-5 from Homo sapiens (Human).